The following is a 273-amino-acid chain: 2,3,4,5-tetrahydropyridine-2,6-dicarboxylate N-succinyltransferase (273 aa).

The protein belongs to the transferase hexapeptide repeat family.

The protein resides in the cytoplasm. The catalysed reaction is (S)-2,3,4,5-tetrahydrodipicolinate + succinyl-CoA + H2O = (S)-2-succinylamino-6-oxoheptanedioate + CoA. It participates in amino-acid biosynthesis; L-lysine biosynthesis via DAP pathway; LL-2,6-diaminopimelate from (S)-tetrahydrodipicolinate (succinylase route): step 1/3. In Bordetella petrii (strain ATCC BAA-461 / DSM 12804 / CCUG 43448), this protein is 2,3,4,5-tetrahydropyridine-2,6-dicarboxylate N-succinyltransferase.